A 361-amino-acid polypeptide reads, in one-letter code: Velvet complex subunit B (361 aa).

Disordered stretches follow at residues 1–36 (MYAV…SLRQ) and 308–340 (NGAP…VLLR). A compositionally biased stretch (polar residues) spans 23-35 (PSVQYPSGTTSLR). Residues 47–353 (QDGRSWSLQV…SASALRYRVS (307 aa)) enclose the Velvet domain. Low complexity predominate over residues 323–336 (SLNPSRSSPPKSSP).

It belongs to the velvet family. VelB subfamily. As to quaternary structure, component of the heterotrimeric velvet complex composed of laeA, veA and velB; VeA acting as a bridging protein between laeA and velB. Interacts with velA. Forms a heterodimeric complex with vosA; the formation of the velB-vosA complex is light-dependent. Interacts with vosA.

It is found in the nucleus. The protein resides in the cytoplasm. In terms of biological role, component of the velvet transcription factor complex that controls sexual/asexual developmental ratio in response to light, promoting sexual development in the darkness while stimulating asexual sporulation under illumination. The velvet complex acts as a global regulator for secondary metabolite gene expression. Component of the velB-VosA heterodimeric complex that plays a dual role in activating genes associated with spore maturation and repressing certain development-associated genes. The velB-VosA complex binds DNA through the DNA-binding domain of vosA that recognizes an 11-nucleotide consensus sequence 5'-CTGGCCGCGGC-3' consisting of two motifs in the promoters of key developmental regulatory genes. Controls conidiophore formation. This chain is Velvet complex subunit B, found in Penicillium rubens (strain ATCC 28089 / DSM 1075 / NRRL 1951 / Wisconsin 54-1255) (Penicillium chrysogenum).